We begin with the raw amino-acid sequence, 89 residues long: Arminin 7591 (89 aa).

The first 18 residues, M1–S18, serve as a signal peptide directing secretion. The propeptide occupies K19–A58. At L86 the chain carries Leucine amide.

This sequence belongs to the arminin family. In terms of tissue distribution, expressed in entodermal epithelium along the body column.

Its subcellular location is the secreted. The protein resides in the target cell membrane. Functionally, antimicrobial peptide with a broad-spectrum antimicrobial activity. Keeps its antibacterial activity under a wide range of salt concentrations that mimic physiological conditions of human blood, which is surprising, since Hydra is an obligate freshwater animal with nearly no salt tolerance. Does not affect red blood cells. The polypeptide is Arminin 7591 (Hydra vulgaris (Hydra)).